We begin with the raw amino-acid sequence, 526 residues long: Cytochrome P450 monooxygenase SAT11 (526 aa).

The chain crosses the membrane as a helical span at residues 18–38 (AFLLIAMLYLGYLLCICFYNI). N-linked (GlcNAc...) asparagine glycosylation is found at asparagine 125 and asparagine 447. Cysteine 455 contacts heme. The N-linked (GlcNAc...) asparagine glycan is linked to asparagine 520.

The protein belongs to the cytochrome P450 family. Heme is required as a cofactor.

Its subcellular location is the membrane. The protein operates within mycotoxin biosynthesis. Cytochrome P450 monooxygenase; part of the satratoxin SC2 cluster involved in the biosynthesis of satratoxins, trichothecene mycotoxins that are associated with human food poisonings. Satratoxins are suggested to be made by products of multiple gene clusters (SC1, SC2 and SC3) that encode 21 proteins in all, including polyketide synthases, acetyltransferases, and other enzymes expected to modify the trichothecene skeleton. SC1 encodes 10 proteins, SAT1 to SAT10. The largest are SAT8, which encodes a putative polyketide synthase (PKS) with a conventional non-reducing architecture, and SAT10, a putative protein containing four ankyrin repeats and thus may be involved in protein scaffolding. The putative short-chain reductase SAT3 may assist the PKS in some capacity. SAT6 contains a secretory lipase domain and acts probably as a trichothecene esterase. SAT5 encodes a putative acetyltransferase, and so, with SAT6, may affect endogenous protection from toxicity. The probable transcription factor SAT9 may regulate the expression of the SC1 cluster. SC2 encodes proteins SAT11 to SAT16, the largest of which encodes the putative reducing PKS SAT13. SAT11 is a cytochrome P450 monooxygenase, while SAT14 and SAT16 are probable acetyltransferases. The SC2 cluster may be regulated by the transcription factor SAT15. SC3 is a small cluster that encodes 5 proteins, SAT17 to SAT21. SAT21 is a putative MFS-type transporter which may have a role in exporting secondary metabolites. The four other proteins putatively encoded in SC3 include the taurine hydroxylase-like protein SAT17, the O-methyltransferase SAT18, the acetyltransferase SAT19, and the Cys6-type zinc finger SAT20, the latter being probably involved in regulation of SC3 expression. This is Cytochrome P450 monooxygenase SAT11 from Stachybotrys chartarum (strain CBS 109288 / IBT 7711) (Toxic black mold).